The sequence spans 122 residues: Phospholipase A2 crotoxin basic subunit CBd (122 aa).

Intrachain disulfides connect Cys-26–Cys-115, Cys-28–Cys-44, Cys-43–Cys-95, Cys-49–Cys-122, Cys-50–Cys-88, Cys-57–Cys-81, and Cys-75–Cys-86. Positions 27, 29, and 31 each coordinate Ca(2+). The active site involves His-47. Asp-48 is a Ca(2+) binding site. The active site involves Asp-89.

This sequence belongs to the phospholipase A2 family. Group II subfamily. D49 sub-subfamily. As to quaternary structure, heterodimer of one of the acidic (CA1, CA2, CA3 or CA4) and one of the basic (CBa1, CBa2, CBb, CBc or CBd) subunits; non-covalently linked. The acidic subunit is non-toxic, without enzymatic activity and comprises 3 peptides that are cross-linked by 5 disulfide bridges. The basic subunit is toxic, has phospholipase A2 activity and is composed of a single chain. Multiple variants of each subunit give different crotoxin complexes that can be subdivided into 2 classes: (1) those of high toxicity, low PLA2 activity (CBb, CBc and CBd linked with high affinity to any CA) and high stability (K(d)=4.5 nM) and (2) those of moderate toxicity, high PLA2 activity (CBa2 linked with low affinity to any CA) and low stability (K(d)=25 nM). Interacts with crotoxin inhibitor from Crotalus serum (CICS); the interaction leads to dissociation of the CA-CB heterodimer and to inhibition of PLA2 activity of the CB subunit. Interacts with human NBD1 domain of CFTR. The cofactor is Ca(2+). Expressed by the venom gland.

The protein resides in the secreted. The enzyme catalyses a 1,2-diacyl-sn-glycero-3-phosphocholine + H2O = a 1-acyl-sn-glycero-3-phosphocholine + a fatty acid + H(+). Functionally, heterodimer CA-CB: Crotoxin is a potent presynaptic neurotoxin that possesses phospholipase A2 (PLA2) activity and exerts a lethal action by blocking neuromuscular transmission. It consists of a non-covalent association of a basic and weakly toxic PLA2 subunit (CBa2, CBb, CBc, or CBd), with a small acidic, non-enzymatic and non-toxic subunit (CA1, CA2, CA3 or CA4). The complex acts by binding to a specific 48-kDa protein (R48) receptor located on presynaptic membranes, forming a transient ternary complex CA-CB-R48, followed by dissociation of the CA-CB complex and release of the CA subunit. At equilibrium, only the CB subunits remain associated with the specific crotoxin receptor. In addition to neurotoxicity, crotoxin has been found to exert myotoxicity, nephrotoxicity, and cardiovascular toxicity. Moreover, anti-inflammatory, immunomodulatory, anti-tumor and analgesic effects of crotoxin have also been reported. Monomer CBd: The basic subunit of crotoxin is a snake venom phospholipase A2 (PLA2) that exhibits weak neurotoxicity (10-fold less than the heterodimer) and very strong anticoagulant effects by binding to factor Xa (F10) and inhibiting the prothrombinase activity. In addition, it shows the same effects described for the heterodimer and binds the nucleotide-binding domain (NBD1) of CFTR chloride channels and increases the channel current. PLA2 catalyzes the calcium-dependent hydrolysis of the 2-acyl groups in 3-sn-phosphoglycerides. The protein is Phospholipase A2 crotoxin basic subunit CBd of Crotalus durissus terrificus (South American rattlesnake).